The following is a 428-amino-acid chain: Light-independent protochlorophyllide reductase subunit N (428 aa).

[4Fe-4S] cluster-binding residues include Cys-31, Cys-56, and Cys-117.

The protein belongs to the BchN/ChlN family. As to quaternary structure, protochlorophyllide reductase is composed of three subunits; BchL, BchN and BchB. Forms a heterotetramer of two BchB and two BchN subunits. The cofactor is [4Fe-4S] cluster.

It catalyses the reaction chlorophyllide a + oxidized 2[4Fe-4S]-[ferredoxin] + 2 ADP + 2 phosphate = protochlorophyllide a + reduced 2[4Fe-4S]-[ferredoxin] + 2 ATP + 2 H2O. It functions in the pathway porphyrin-containing compound metabolism; bacteriochlorophyll biosynthesis (light-independent). Component of the dark-operative protochlorophyllide reductase (DPOR) that uses Mg-ATP and reduced ferredoxin to reduce ring D of protochlorophyllide (Pchlide) to form chlorophyllide a (Chlide). This reaction is light-independent. The NB-protein (BchN-BchB) is the catalytic component of the complex. This chain is Light-independent protochlorophyllide reductase subunit N, found in Rhodopseudomonas palustris (strain HaA2).